A 65-amino-acid chain; its full sequence is 7 kDa A-type inclusion protein (65 aa).

Residues 1–20 (MSNQNIPQLSEYQTSVSQVA) are compositionally biased toward polar residues. The disordered stretch occupies residues 1-31 (MSNQNIPQLSEYQTSVSQVAVTPPPKPETPQ).

The chain is 7 kDa A-type inclusion protein from Vaccinia virus (strain Copenhagen) (VACV).